The sequence spans 1091 residues: Error-prone DNA polymerase 1 (1091 aa).

Residues 1051–1064 (RGDEFHHGMPDDHR) are compositionally biased toward basic and acidic residues. Positions 1051–1080 (RGDEFHHGMPDDHRAIRKRPPPSNHDDDEV) are disordered.

It belongs to the DNA polymerase type-C family. DnaE2 subfamily.

The protein resides in the cytoplasm. The enzyme catalyses DNA(n) + a 2'-deoxyribonucleoside 5'-triphosphate = DNA(n+1) + diphosphate. Its function is as follows. DNA polymerase involved in damage-induced mutagenesis and translesion synthesis (TLS). It is not the major replicative DNA polymerase. The sequence is that of Error-prone DNA polymerase 1 from Agrobacterium fabrum (strain C58 / ATCC 33970) (Agrobacterium tumefaciens (strain C58)).